A 216-amino-acid chain; its full sequence is ATP phosphoribosyltransferase (216 aa).

This sequence belongs to the ATP phosphoribosyltransferase family. Short subfamily. In terms of assembly, heteromultimer composed of HisG and HisZ subunits.

Its subcellular location is the cytoplasm. It catalyses the reaction 1-(5-phospho-beta-D-ribosyl)-ATP + diphosphate = 5-phospho-alpha-D-ribose 1-diphosphate + ATP. Its pathway is amino-acid biosynthesis; L-histidine biosynthesis; L-histidine from 5-phospho-alpha-D-ribose 1-diphosphate: step 1/9. Catalyzes the condensation of ATP and 5-phosphoribose 1-diphosphate to form N'-(5'-phosphoribosyl)-ATP (PR-ATP). Has a crucial role in the pathway because the rate of histidine biosynthesis seems to be controlled primarily by regulation of HisG enzymatic activity. The polypeptide is ATP phosphoribosyltransferase (Rubrobacter xylanophilus (strain DSM 9941 / JCM 11954 / NBRC 16129 / PRD-1)).